A 309-amino-acid chain; its full sequence is Oxidoreductase NAD-binding domain-containing protein 1 (309 aa).

A signal peptide spans 1–14 (MVVVIPRLLRGSLG). In terms of domain architecture, FAD-binding FR-type spans 47–161 (HLERTADVVR…VGGEFFFDPK (115 aa)). 175-180 (GVGINP) serves as a coordination point for NAD(+).

This Bos taurus (Bovine) protein is Oxidoreductase NAD-binding domain-containing protein 1 (OXNAD1).